The following is a 424-amino-acid chain: Glutamate-1-semialdehyde 2,1-aminomutase (424 aa).

An N6-(pyridoxal phosphate)lysine modification is found at Lys-263.

It belongs to the class-III pyridoxal-phosphate-dependent aminotransferase family. HemL subfamily. In terms of assembly, homodimer. Pyridoxal 5'-phosphate is required as a cofactor.

The protein localises to the cytoplasm. It catalyses the reaction (S)-4-amino-5-oxopentanoate = 5-aminolevulinate. Its pathway is porphyrin-containing compound metabolism; protoporphyrin-IX biosynthesis; 5-aminolevulinate from L-glutamyl-tRNA(Glu): step 2/2. The polypeptide is Glutamate-1-semialdehyde 2,1-aminomutase (Campylobacter jejuni (strain RM1221)).